The chain runs to 230 residues: Somatolactin (230 aa).

The first 23 residues, 1 to 23, serve as a signal peptide directing secretion; the sequence is MIKTKVLQAWMGIWLCAVNGLLG. Intrachain disulfides connect cysteine 28–cysteine 38, cysteine 87–cysteine 202, and cysteine 219–cysteine 227. Asparagine 177 carries an N-linked (GlcNAc...) asparagine glycan.

It belongs to the somatotropin/prolactin family.

It is found in the secreted. The protein is Somatolactin of Ictalurus punctatus (Channel catfish).